A 643-amino-acid polypeptide reads, in one-letter code: Protein disulfide-isomerase A4 (643 aa).

The N-terminal stretch at M1–A20 is a signal peptide. 2 consecutive Thioredoxin domains span residues V21–Q168 and N170–K300. The segment at A24–D54 is disordered. Residues P27–D54 are compositionally biased toward acidic residues. Residues C90–C93 carry the CXXC motif. 2 disulfide bridges follow: C90–C93 and C205–C208. N6-acetyllysine is present on K365. One can recognise a Thioredoxin 3 domain in the interval F503–T634. The short motif at C553–C556 is the CXXC element. A disulfide bridge links C553 with C556. A Prevents secretion from ER motif is present at residues K640–L643.

It belongs to the protein disulfide isomerase family. As to quaternary structure, part of a large chaperone multiprotein complex comprising DNAJB11, HSP90B1, HSPA5, HYOU, PDIA2, PDIA4, PDIA6, PPIB, SDF2L1, UGGT1 and very small amounts of ERP29, but not, or at very low levels, CALR nor CANX. Component of a complex containing at least CRELD2, MANF, MATN3 and PDIA4.

The protein localises to the endoplasmic reticulum lumen. It localises to the melanosome. It catalyses the reaction Catalyzes the rearrangement of -S-S- bonds in proteins.. This is Protein disulfide-isomerase A4 (PDIA4) from Bos taurus (Bovine).